An 879-amino-acid chain; its full sequence is Phosphoenolpyruvate carboxylase (879 aa).

Active-site residues include His138 and Lys546.

Belongs to the PEPCase type 1 family. Requires Mg(2+) as cofactor.

It carries out the reaction oxaloacetate + phosphate = phosphoenolpyruvate + hydrogencarbonate. Its function is as follows. Forms oxaloacetate, a four-carbon dicarboxylic acid source for the tricarboxylic acid cycle. The chain is Phosphoenolpyruvate carboxylase from Pectobacterium carotovorum subsp. carotovorum (strain PC1).